Reading from the N-terminus, the 196-residue chain is uncharacterized protein (196 aa).

The chain crosses the membrane as a helical span at residues 71–87 (YVKLIGTGCYVAILISG).

It localises to the membrane. This is an uncharacterized protein from Dictyostelium discoideum (Social amoeba).